The sequence spans 184 residues: GTP cyclohydrolase 1 (184 aa).

The Zn(2+) site is built by Cys75, His78, and Cys146.

Belongs to the GTP cyclohydrolase I family. Homomer.

It catalyses the reaction GTP + H2O = 7,8-dihydroneopterin 3'-triphosphate + formate + H(+). The protein operates within cofactor biosynthesis; 7,8-dihydroneopterin triphosphate biosynthesis; 7,8-dihydroneopterin triphosphate from GTP: step 1/1. In Streptococcus pneumoniae (strain Taiwan19F-14), this protein is GTP cyclohydrolase 1.